The following is a 132-amino-acid chain: Ribosome-binding factor A (132 aa).

It belongs to the RbfA family. In terms of assembly, monomer. Binds 30S ribosomal subunits, but not 50S ribosomal subunits or 70S ribosomes.

It is found in the cytoplasm. Its function is as follows. One of several proteins that assist in the late maturation steps of the functional core of the 30S ribosomal subunit. Associates with free 30S ribosomal subunits (but not with 30S subunits that are part of 70S ribosomes or polysomes). Required for efficient processing of 16S rRNA. May interact with the 5'-terminal helix region of 16S rRNA. This Pectobacterium atrosepticum (strain SCRI 1043 / ATCC BAA-672) (Erwinia carotovora subsp. atroseptica) protein is Ribosome-binding factor A.